Consider the following 619-residue polypeptide: Dihydroxy-acid dehydratase (619 aa).

Position 81 (D81) interacts with Mg(2+). C122 serves as a coordination point for [2Fe-2S] cluster. 2 residues coordinate Mg(2+): D123 and K124. At K124 the chain carries N6-carboxylysine. C195 contacts [2Fe-2S] cluster. A Mg(2+)-binding site is contributed by E492. S518 serves as the catalytic Proton acceptor.

The protein belongs to the IlvD/Edd family. As to quaternary structure, homodimer. The cofactor is [2Fe-2S] cluster. It depends on Mg(2+) as a cofactor.

It catalyses the reaction (2R)-2,3-dihydroxy-3-methylbutanoate = 3-methyl-2-oxobutanoate + H2O. The enzyme catalyses (2R,3R)-2,3-dihydroxy-3-methylpentanoate = (S)-3-methyl-2-oxopentanoate + H2O. It participates in amino-acid biosynthesis; L-isoleucine biosynthesis; L-isoleucine from 2-oxobutanoate: step 3/4. The protein operates within amino-acid biosynthesis; L-valine biosynthesis; L-valine from pyruvate: step 3/4. Functionally, functions in the biosynthesis of branched-chain amino acids. Catalyzes the dehydration of (2R,3R)-2,3-dihydroxy-3-methylpentanoate (2,3-dihydroxy-3-methylvalerate) into 2-oxo-3-methylpentanoate (2-oxo-3-methylvalerate) and of (2R)-2,3-dihydroxy-3-methylbutanoate (2,3-dihydroxyisovalerate) into 2-oxo-3-methylbutanoate (2-oxoisovalerate), the penultimate precursor to L-isoleucine and L-valine, respectively. In Synechococcus elongatus (strain ATCC 33912 / PCC 7942 / FACHB-805) (Anacystis nidulans R2), this protein is Dihydroxy-acid dehydratase.